Consider the following 284-residue polypeptide: L-ribulose-5-phosphate 3-epimerase UlaE (284 aa).

Belongs to the L-ribulose-5-phosphate 3-epimerase family.

The catalysed reaction is L-ribulose 5-phosphate = L-xylulose 5-phosphate. Its pathway is cofactor degradation; L-ascorbate degradation; D-xylulose 5-phosphate from L-ascorbate: step 3/4. Functionally, catalyzes the isomerization of L-xylulose-5-phosphate to L-ribulose-5-phosphate. Is involved in the anaerobic L-ascorbate utilization. The protein is L-ribulose-5-phosphate 3-epimerase UlaE of Salmonella dublin (strain CT_02021853).